We begin with the raw amino-acid sequence, 301 residues long: Rhodopsin (301 aa).

Residues 1-18 (LHMIHLHWYQYPPMNPIM) lie on the Extracellular side of the membrane. The helical transmembrane segment at 19–43 (YPLLLVFMLITGILCLAGNFVTIWV) threads the bilayer. Residues 44-55 (FMNTKSLRTPAN) lie on the Cytoplasmic side of the membrane. A helical transmembrane segment spans residues 56–78 (LLVVNLAMSDFLMMFTMFPPMMI). Topologically, residues 79–92 (TCYYHTWTLGATFC) are extracellular. The cysteines at positions 92 and 169 are disulfide-linked. Residues 93–115 (QVYAFLGNLCGCASIWTMVFITF) form a helical membrane-spanning segment. The 'Ionic lock' involved in activated form stabilization motif lies at 116 to 118 (DRY). The Cytoplasmic portion of the chain corresponds to 116–134 (DRYNVIVKGVAGEPLSTKK). Residues 135–155 (ATLWILTIWILSTTWCVAPFF) traverse the membrane as a helical segment. The Extracellular segment spans residues 156–182 (GWNRYVPEGNLTGCGTDYLSQDILSRS). An N-linked (GlcNAc...) asparagine glycan is attached at Asn-165. The helical transmembrane segment at 183–204 (YLYIYSTWVYFLPLAITIYCYV) threads the bilayer. Residues 205–245 (VIIKAVAAHEKGMRDQAKKMGIKSLRNEEAQKTSAECRLAK) are Cytoplasmic-facing. The helical transmembrane segment at 246–267 (IAMTTVALWFIAWTPYLLINWV) threads the bilayer. Residues 268–278 (GMFARSYLSPV) lie on the Extracellular side of the membrane. A helical membrane pass occupies residues 279 to 300 (YTIWGYVFAKANAVYNPIVYAI). Lys-288 carries the N6-(retinylidene)lysine modification.

The protein belongs to the G-protein coupled receptor 1 family. Opsin subfamily. Homodimer. Interacts with GNAQ. Contains one covalently linked retinal chromophore.

The protein resides in the cell projection. The protein localises to the rhabdomere membrane. In terms of biological role, photoreceptor required for image-forming vision at low light intensity. Can use both retinal and 3-dehydroretinal as visual pigment. Light-induced isomerization of 11-cis to all-trans retinal triggers a conformational change that activates signaling via G-proteins. Signaling via GNAQ probably mediates the activation of phospholipase C. This chain is Rhodopsin (RHO), found in Orconectes australis (Southern cave crayfish).